A 463-amino-acid polypeptide reads, in one-letter code: MCSIPPLRLLEVVDDLTCLVNSSQYSRWNFFTFTLPGFTLPMRKEFTSSCKGSFSNHPVPDHPCKLVVFFRPKMVVTAGADAYLKILEYGVKKTQLRIDRLLLQAFMAGIFVAMAGHCCTVLAGSYPTDPGDPLAVAKPTQKFIYGALFPVAFICIILTGAELFTGNTMTMLICYFQKRVTMLQLGVNWLGSLAGNWLGALFGAYFLSYLTGALGDEHVRQFLFRTCVNKISYGWGECFLRGVGCNTFVCLAVWAVIASENVAGKVLVMWFPIVAFCVGGYEHIIANMYTLQAGLMAGAPVAILDVIAFNFLPTLLGNIVGGCLLVGAVYAYNFYPTLSYTETTGAKVYVQEVGPVLDRRSSMQVSMTEREPDGQVVTEYEAVPFESFGGEYIVNKHATMAAPIPSRASSFLYPFQWQRQRSQSGNLSTHARLDLPNRPVEPPSDGLEVTPQSQTAESVAQQV.

At 1 to 100 (MCSIPPLRLL…VKKTQLRIDR (100 aa)) the chain is on the cytoplasmic side. A helical membrane pass occupies residues 101-121 (LLLQAFMAGIFVAMAGHCCTV). The Extracellular portion of the chain corresponds to 122–142 (LAGSYPTDPGDPLAVAKPTQK). Residues 143–163 (FIYGALFPVAFICIILTGAEL) form a helical membrane-spanning segment. Residues 164-189 (FTGNTMTMLICYFQKRVTMLQLGVNW) are Cytoplasmic-facing. A helical membrane pass occupies residues 190 to 210 (LGSLAGNWLGALFGAYFLSYL). The Extracellular portion of the chain corresponds to 211–237 (TGALGDEHVRQFLFRTCVNKISYGWGE). A helical transmembrane segment spans residues 238 to 258 (CFLRGVGCNTFVCLAVWAVIA). Residues 259 to 265 (SENVAGK) are Cytoplasmic-facing. A helical transmembrane segment spans residues 266–286 (VLVMWFPIVAFCVGGYEHIIA). Over 287–305 (NMYTLQAGLMAGAPVAILD) the chain is Extracellular. The helical transmembrane segment at 306–326 (VIAFNFLPTLLGNIVGGCLLV) threads the bilayer. Residues 327 to 463 (GAVYAYNFYP…QTAESVAQQV (137 aa)) are Cytoplasmic-facing. The segment at 424–463 (SGNLSTHARLDLPNRPVEPPSDGLEVTPQSQTAESVAQQV) is disordered. Residues 450-463 (TPQSQTAESVAQQV) are compositionally biased toward polar residues.

Belongs to the FNT transporter (TC 1.A.16) family. In terms of assembly, homopentamer.

The protein resides in the cell membrane. It catalyses the reaction (S)-lactate(in) + H(+)(in) = (S)-lactate(out) + H(+)(out). It carries out the reaction formate(in) + H(+)(in) = formate(out) + H(+)(out). The catalysed reaction is pyruvate(out) + H(+)(out) = pyruvate(in) + H(+)(in). The enzyme catalyses acetate(out) + H(+)(out) = acetate(in) + H(+)(in). Its activity is regulated as follows. Inhibited by p-chloromercuribenzene sulfonate (pCMBS). Methyl methanethiosulfonate (MMTS) inhibits L-lactate but not formate transport. Inhibited by the Malaria Box compound MMV007839. Inhibited by BH-296, BH-317, BH-326 and BH-388 compounds. Monocarboxylate-proton symporter; active in acidic-to-neutral pH range. Transports L-lactate and formate. The chain is Formate-nitrite transporter 2 from Toxoplasma gondii (strain ATCC 50611 / Me49).